The sequence spans 246 residues: 1-(5-phosphoribosyl)-5-[(5-phosphoribosylamino)methylideneamino] imidazole-4-carboxamide isomerase (246 aa).

The active-site Proton acceptor is Asp8. The Proton donor role is filled by Asp129.

Belongs to the HisA/HisF family.

The protein resides in the cytoplasm. The catalysed reaction is 1-(5-phospho-beta-D-ribosyl)-5-[(5-phospho-beta-D-ribosylamino)methylideneamino]imidazole-4-carboxamide = 5-[(5-phospho-1-deoxy-D-ribulos-1-ylimino)methylamino]-1-(5-phospho-beta-D-ribosyl)imidazole-4-carboxamide. The protein operates within amino-acid biosynthesis; L-histidine biosynthesis; L-histidine from 5-phospho-alpha-D-ribose 1-diphosphate: step 4/9. This is 1-(5-phosphoribosyl)-5-[(5-phosphoribosylamino)methylideneamino] imidazole-4-carboxamide isomerase from Nitrobacter hamburgensis (strain DSM 10229 / NCIMB 13809 / X14).